Consider the following 408-residue polypeptide: NADH-quinone oxidoreductase subunit D (408 aa).

The protein belongs to the complex I 49 kDa subunit family. In terms of assembly, NDH-1 is composed of 14 different subunits. Subunits NuoB, C, D, E, F, and G constitute the peripheral sector of the complex.

The protein resides in the cell inner membrane. It catalyses the reaction a quinone + NADH + 5 H(+)(in) = a quinol + NAD(+) + 4 H(+)(out). Its function is as follows. NDH-1 shuttles electrons from NADH, via FMN and iron-sulfur (Fe-S) centers, to quinones in the respiratory chain. The immediate electron acceptor for the enzyme in this species is believed to be ubiquinone. Couples the redox reaction to proton translocation (for every two electrons transferred, four hydrogen ions are translocated across the cytoplasmic membrane), and thus conserves the redox energy in a proton gradient. The sequence is that of NADH-quinone oxidoreductase subunit D from Campylobacter jejuni subsp. doylei (strain ATCC BAA-1458 / RM4099 / 269.97).